Here is a 598-residue protein sequence, read N- to C-terminus: Elongation factor 4 (598 aa).

The 178-residue stretch at 4–181 folds into the tr-type G domain; the sequence is SKIRNFSIIA…AVIEKIPAPK (178 aa). Residues 16–21 and 128–131 each bind GTP; these read DHGKST and NKID.

The protein belongs to the TRAFAC class translation factor GTPase superfamily. Classic translation factor GTPase family. LepA subfamily.

The protein localises to the cell membrane. The catalysed reaction is GTP + H2O = GDP + phosphate + H(+). Required for accurate and efficient protein synthesis under certain stress conditions. May act as a fidelity factor of the translation reaction, by catalyzing a one-codon backward translocation of tRNAs on improperly translocated ribosomes. Back-translocation proceeds from a post-translocation (POST) complex to a pre-translocation (PRE) complex, thus giving elongation factor G a second chance to translocate the tRNAs correctly. Binds to ribosomes in a GTP-dependent manner. The polypeptide is Elongation factor 4 (Mycoplasma mobile (strain ATCC 43663 / 163K / NCTC 11711) (Mesomycoplasma mobile)).